A 149-amino-acid chain; its full sequence is MSNESNDLEKNISHLDPTGVDNAYIPPEQPETKHSRFNIDRGTLRNHFIAAVGEFCGTFMFLWCAYVICNVANHDVALTTEPEGSHPGQLIMIALGFGFSVMFSIWCFWWGFEPSRFSLFVFGQSHLTSQMCSDVVSSDHCWDGCWWCR.

Positions 1–35 (MSNESNDLEKNISHLDPTGVDNAYIPPEQPETKHS) are disordered. The Cytoplasmic segment spans residues 1 to 47 (MSNESNDLEKNISHLDPTGVDNAYIPPEQPETKHSRFNIDRGTLRNH). A helical transmembrane segment spans residues 48-68 (FIAAVGEFCGTFMFLWCAYVI). Topologically, residues 69 to 89 (CNVANHDVALTTEPEGSHPGQ) are extracellular. The helical transmembrane segment at 90 to 110 (LIMIALGFGFSVMFSIWCFWW) threads the bilayer. Residues 111 to 149 (GFEPSRFSLFVFGQSHLTSQMCSDVVSSDHCWDGCWWCR) lie on the Cytoplasmic side of the membrane.

Belongs to the MIP/aquaporin (TC 1.A.8) family.

The protein localises to the endoplasmic reticulum membrane. The protein resides in the cell membrane. Functionally, water channel required to facilitate the transport of water across membranes. Involved in freeze tolerance, osmotolerance and cell flocculation in liquid cultures. Is non-functional in most laboratory strains. This Saccharomyces cerevisiae (strain Lalvin EC1118 / Prise de mousse) (Baker's yeast) protein is Aquaporin-like protein 2 (AQY2-2).